A 259-amino-acid chain; its full sequence is Protein CDI (259 aa).

Residues Phe-236–Lys-259 adopt a coiled-coil conformation.

Mostly expressed in pollen grains and pollen tubes, and, at low levels, in seedlings, roots, stems, leaves, flowers and siliques.

It localises to the cytoplasm. The protein localises to the cytosol. Probable nucleotide-diphospho-sugar transferase required for pollen germination and tube growth. The protein is Protein CDI of Arabidopsis thaliana (Mouse-ear cress).